The sequence spans 507 residues: Cyclin-dependent kinase-like 2 (507 aa).

The 286-residue stretch at 4 to 289 folds into the Protein kinase domain; it reads YENLGLVGEG…CADLLHHDFF (286 aa). ATP-binding positions include 10–18 and lysine 33; that span reads VGEGSYGMV. The [NKR]KIAxRE motif lies at 45-51; that stretch reads KKIAMRE. The active-site Proton acceptor is the aspartate 126. The disordered stretch occupies residues 365-392; that stretch reads KTEKGTRASNGSCLHDNGTSHKGLSSTS.

This sequence belongs to the protein kinase superfamily. CMGC Ser/Thr protein kinase family. CDC2/CDKX subfamily.

It localises to the cytoplasm. Its subcellular location is the nucleus. The enzyme catalyses L-seryl-[protein] + ATP = O-phospho-L-seryl-[protein] + ADP + H(+). It carries out the reaction L-threonyl-[protein] + ATP = O-phospho-L-threonyl-[protein] + ADP + H(+). This Rattus norvegicus (Rat) protein is Cyclin-dependent kinase-like 2.